Consider the following 1320-residue polypeptide: FERM and PDZ domain-containing protein 4 (1320 aa).

The WW domain maps to 33-66 (QVPPYGWEMMTNRDGRDYFINHMTQAIPFDDPRF). Positions 78–155 (KVEMRRDPVL…SILLTVIQPY (78 aa)) constitute a PDZ domain. The region spanning 204-519 (NVLKVYLENG…GYYRLLVDSR (316 aa)) is the FERM domain. Disordered stretches follow at residues 809 to 847 (APPPGFRDSSDEEDTQSQATSFHEDKEQGSSLQNEEIPV), 897 to 927 (YSPESSSDSGNETNSSEMTEGSELAAAQKQS), 949 to 981 (TEFPTSKAPSVGLPPKSSHGLAARPATDLPPKV), 1024 to 1050 (KRKSKLPEGEGKSPLSGNIPGKKQQGT), 1114 to 1139 (PRGPGLGNREAEGKEDGTVEGGADDA), and 1204 to 1274 (GHFS…ATFE). Residues 900–913 (ESSSDSGNETNSSE) show a composition bias toward low complexity. The span at 1204–1217 (GHFSLQSSQGSSVD) shows a compositional bias: polar residues. A compositionally biased stretch (low complexity) spans 1223–1232 (GSSSSACATP).

As to quaternary structure, interacts (via C-terminus) with DLG1, DLG2, DLG3 and DLG4/PSD95. Interacts (via N-terminus) with ARHGEF7; the interaction is mediated by the PDZ domain. Interacts with GPSM2 (via TPR repeat region). Expressed in various regions of the brain, including cortex, hippocampus, cerebellum, olfactory bulb and medial habenular nucleus.

The protein localises to the cell projection. It is found in the dendritic spine. In terms of biological role, positive regulator of dendritic spine morphogenesis and density. Required for the maintenance of excitatory synaptic transmission. Binds phosphatidylinositol 4,5-bisphosphate. This Mus musculus (Mouse) protein is FERM and PDZ domain-containing protein 4 (Frmpd4).